The following is a 142-amino-acid chain: Small ribosomal subunit protein uS9c (142 aa).

Belongs to the universal ribosomal protein uS9 family.

It is found in the plastid. The protein localises to the chloroplast. This is Small ribosomal subunit protein uS9c (rps9) from Stigeoclonium helveticum (Green alga).